The chain runs to 203 residues: Pro-FMRFamide-related neuropeptide VF (203 aa).

Residues methionine 1–cysteine 26 form the signal peptide. The propeptide occupies serine 27 to arginine 57. Phenylalanine 94 is subject to Phenylalanine amide. Positions asparagine 97–alanine 106 are excised as a propeptide. Phenylalanine 125 is subject to Phenylalanine amide. A propeptide spanning residues threonine 128–leucine 203 is cleaved from the precursor. Residues histidine 161–lysine 186 form a disordered region. Residues glutamine 171–lysine 186 are compositionally biased toward basic and acidic residues.

It belongs to the FARP (FMRFamide related peptide) family. In terms of tissue distribution, isoform 1 is expressed at high levels in the hypothalamus and eye. Isoform 2 is specifically expressed in a region between the dorsomedial hypothalamic and ventromedial hypothalamic nuclei.

The protein localises to the secreted. Its function is as follows. Efficiently inhibits forskolin-induced production of cAMP. Acts as a potent negative regulator of gonadotropin synthesis and secretion. Induces secretion of prolactin. In terms of biological role, efficiently inhibits forskolin-induced production of cAMP. Blocks morphine-induced analgesia. In Rattus norvegicus (Rat), this protein is Pro-FMRFamide-related neuropeptide VF (Npvf).